A 183-amino-acid polypeptide reads, in one-letter code: Nodulation protein L (183 aa).

It belongs to the transferase hexapeptide repeat family.

Its function is as follows. Acetyltransferase implicated in the O-acetylation of Nod factors. The polypeptide is Nodulation protein L (nodL) (Rhizobium meliloti (strain 1021) (Ensifer meliloti)).